The following is a 186-amino-acid chain: Adenine phosphoribosyltransferase (186 aa).

The protein belongs to the purine/pyrimidine phosphoribosyltransferase family. As to quaternary structure, homodimer.

The protein localises to the cytoplasm. It carries out the reaction AMP + diphosphate = 5-phospho-alpha-D-ribose 1-diphosphate + adenine. Its pathway is purine metabolism; AMP biosynthesis via salvage pathway; AMP from adenine: step 1/1. Catalyzes a salvage reaction resulting in the formation of AMP, that is energically less costly than de novo synthesis. The protein is Adenine phosphoribosyltransferase of Sulfurovum sp. (strain NBC37-1).